The chain runs to 388 residues: Nesprin-4 (388 aa).

The Cytoplasmic segment spans residues 1–339 (MALVPPLGRE…GVPAPASKRP (339 aa)). The interval 60 to 92 (ELKSTESATSPSRLPLASSHEHQDGGKPCEHSD) is disordered. Over residues 78–92 (SHEHQDGGKPCEHSD) the composition is skewed to basic and acidic residues. The KASH domain occupies 331-388 (VPAPASKRPLTLFFLLLFLLLVGATLLLPLSGVSCCSHARLARTPYLVLSYVNGLPPI). Residues 340–360 (LTLFFLLLFLLLVGATLLLPL) traverse the membrane as a helical; Anchor for type IV membrane protein segment. Over 361 to 388 (SGVSCCSHARLARTPYLVLSYVNGLPPI) the chain is Perinuclear space.

This sequence belongs to the nesprin family. In terms of assembly, core component of LINC complexes which are composed of inner nuclear membrane SUN domain-containing proteins coupled to outer nuclear membrane KASH domain-containing nesprins. SUN and KASH domain-containing proteins seem to bind each other promiscuously; however, differentially expression of LINC complex constituents can give rise to specific assemblies. Probably part of a SUN1-containing LINC complex. Interacts with kinesins KIF5B and KLC1. In terms of processing, the disulfid bond with SUN1 or SUN2 is required for stability of the respective LINC complex under tensile forces. Expressed in secretory epithelial cells, such as those found in exocrine pancreas, bulbourethral gland, mammary gland and salivary gland (at protein level). Also expressed in the cochlea, where it is restricted primarily to the 3 rows of outer hair cells and 1 row of inner hair cells (at protein level). Not detected in other cells of the cochlea, including Deiter's cells and pillar cells, nor in liver and kidney (at protein level).

The protein resides in the nucleus outer membrane. In terms of biological role, as a component of the LINC (LInker of Nucleoskeleton and Cytoskeleton) complex, involved in the connection between the nuclear lamina and the cytoskeleton. The nucleocytoplasmic interactions established by the LINC complex play an important role in the transmission of mechanical forces across the nuclear envelope and in nuclear movement and positioning. Behaves as a kinesin cargo, providing a functional binding site for kinesin-1 at the nuclear envelope. Hence may contribute to the establishment of secretory epithelial morphology, by promoting kinesin-dependent apical migration of the centrosome and Golgi apparatus and basal localization of the nucleus. This chain is Nesprin-4 (Syne4), found in Mus musculus (Mouse).